Here is a 106-residue protein sequence, read N- to C-terminus: Large ribosomal subunit protein uL23 (106 aa).

The protein belongs to the universal ribosomal protein uL23 family. In terms of assembly, part of the 50S ribosomal subunit. Contacts protein L29, and trigger factor when it is bound to the ribosome.

One of the early assembly proteins it binds 23S rRNA. One of the proteins that surrounds the polypeptide exit tunnel on the outside of the ribosome. Forms the main docking site for trigger factor binding to the ribosome. The protein is Large ribosomal subunit protein uL23 of Neisseria meningitidis serogroup C / serotype 2a (strain ATCC 700532 / DSM 15464 / FAM18).